The primary structure comprises 1011 residues: Protein argonaute 1C (1011 aa).

Residues 1-11 are compositionally biased toward basic residues; it reads MASRRPTHRHH. Disordered stretches follow at residues 1 to 95 and 107 to 147; these read MASR…SPLA and RPSE…PLRP. 2 stretches are compositionally biased toward low complexity: residues 28–53 and 61–92; these read ARYA…ARGA and QQQQ…ASSS. Polar residues predominate over residues 127 to 140; it reads ATTTPHHIPSSSKS. Residues 352–462 enclose the PAZ domain; sequence PVIDFVAQLL…LPMEVCKIVE (111 aa). One can recognise a Piwi domain in the interval 638-959; sequence LLIGILPDNN…AAFRARFYME (322 aa). Residues 963–982 show a composition bias toward low complexity; that stretch reads SDSSSVVSGPGVRGPLSGSS. The interval 963-994 is disordered; the sequence is SDSSSVVSGPGVRGPLSGSSTSRTRAPGGAAV.

The protein belongs to the argonaute family. Ago subfamily.

Probably involved in the RNA silencing pathway. May bind to short RNAs such as microRNAs (miRNAs) or short interfering RNAs (siRNAs), and represses the translation of mRNAs which are complementary to them. This chain is Protein argonaute 1C (AGO1C), found in Oryza sativa subsp. japonica (Rice).